Here is a 157-residue protein sequence, read N- to C-terminus: 3-hydroxybutyryl-CoA dehydratase (157 aa).

The 99-residue stretch at 22–120 folds into the MaoC-like domain; that stretch reads KKEISSSDVV…IPERRRARLA (99 aa).

It catalyses the reaction (3R)-3-hydroxybutanoyl-CoA = (2E)-butenoyl-CoA + H2O. In terms of biological role, involved in the regeneration of glyoxylate from a molecule of acetyl-CoA. The polypeptide is 3-hydroxybutyryl-CoA dehydratase (Methylorubrum extorquens (strain ATCC 14718 / DSM 1338 / JCM 2805 / NCIMB 9133 / AM1) (Methylobacterium extorquens)).